Consider the following 455-residue polypeptide: tRNA modification GTPase MnmE (455 aa).

3 residues coordinate (6S)-5-formyl-5,6,7,8-tetrahydrofolate: K29, E91, and R131. One can recognise a TrmE-type G domain in the interval 226–378; that stretch reads GLKVALVGLP…LIQELLKLAG (153 aa). N236 contacts K(+). GTP contacts are provided by residues 236 to 241, 255 to 261, 280 to 283, and 341 to 344; these read NVGKSS, TDLPGTT, DTAG, and NKAD. Mg(2+) is bound at residue S240. T255, L257, and T260 together coordinate K(+). Position 261 (T261) interacts with Mg(2+). K455 contributes to the (6S)-5-formyl-5,6,7,8-tetrahydrofolate binding site.

The protein belongs to the TRAFAC class TrmE-Era-EngA-EngB-Septin-like GTPase superfamily. TrmE GTPase family. In terms of assembly, homodimer. Heterotetramer of two MnmE and two MnmG subunits. K(+) is required as a cofactor.

Its subcellular location is the cytoplasm. Its function is as follows. Exhibits a very high intrinsic GTPase hydrolysis rate. Involved in the addition of a carboxymethylaminomethyl (cmnm) group at the wobble position (U34) of certain tRNAs, forming tRNA-cmnm(5)s(2)U34. This is tRNA modification GTPase MnmE from Prochlorococcus marinus (strain SARG / CCMP1375 / SS120).